We begin with the raw amino-acid sequence, 130 residues long: Phosphoribosyl-AMP cyclohydrolase (130 aa).

Residue D77 participates in Mg(2+) binding. Position 78 (C78) interacts with Zn(2+). Residues D79 and D81 each contribute to the Mg(2+) site. C95 and C102 together coordinate Zn(2+).

This sequence belongs to the PRA-CH family. Homodimer. Requires Mg(2+) as cofactor. Zn(2+) is required as a cofactor.

Its subcellular location is the cytoplasm. It catalyses the reaction 1-(5-phospho-beta-D-ribosyl)-5'-AMP + H2O = 1-(5-phospho-beta-D-ribosyl)-5-[(5-phospho-beta-D-ribosylamino)methylideneamino]imidazole-4-carboxamide. Its pathway is amino-acid biosynthesis; L-histidine biosynthesis; L-histidine from 5-phospho-alpha-D-ribose 1-diphosphate: step 3/9. Catalyzes the hydrolysis of the adenine ring of phosphoribosyl-AMP. This Pseudomonas putida (strain ATCC 700007 / DSM 6899 / JCM 31910 / BCRC 17059 / LMG 24140 / F1) protein is Phosphoribosyl-AMP cyclohydrolase.